A 317-amino-acid polypeptide reads, in one-letter code: Fruit protein pKIWI502 (317 aa).

The tract at residues 1–29 is disordered; it reads MSITLSRPSLSRPSLSRHPSLTLHSSLSH. Residues 71-182 enclose the FAD-binding FR-type domain; it reads YIWTPVPISR…TQIIGRGFDI (112 aa).

This Actinidia deliciosa (Kiwi) protein is Fruit protein pKIWI502.